Consider the following 286-residue polypeptide: MTRKSILVTGASSGLGYAAVQKLAENGFYVFAAVREIRGMFSNIKNIKELKLDLANEQSIEELFIYIEATQKDYPLWGLVNNAGICVPSPLELLREFDLRQQLDTNVIGQLLVTQFALPFIRKSKGRIINITSGLGSIAVPYLGAYSIAQFAKMAFTDVLRRELKHSGVTVSVVQPGAIYTPIWDKFLVTGQEILDNSLDEKRKIYERSFIEFLKASQIGVNSVKTTRNDFAKVILDIFKAEIPETHYYVGDDAKNFSNKSKILTVTEIDEWFDLQSPTESEFKKI.

Y146 (proton acceptor) is an active-site residue.

The protein belongs to the short-chain dehydrogenases/reductases (SDR) family.

It carries out the reaction 3-amino-5,6,7,7a-tetrahydro-1H-pyrrolizin-1-one + AH2 = 3-amino-tetrahydro-1H-pyrrolizin-1-ol + A. In terms of biological role, involved in the biosynthetic pathway of pyrrolizwilline, a pyrrolizidine alkaloid. Catalyzes the reduction of 3-amino-tetrahydro-pyrrolizinone to 3-amino-tetrahydro-pyrrolizinol. In Xenorhabdus hominickii, this protein is 3-amino-tetrahydro-pyrrolizinone reductase (xhpD).